Here is a 224-residue protein sequence, read N- to C-terminus: Phosphoribosylformylglycinamidine synthase subunit PurQ (224 aa).

The region spanning 1–224 (MIAIIKFPGT…ILLRRLGEWA (224 aa)) is the Glutamine amidotransferase type-1 domain. The active-site Nucleophile is cysteine 84. Active-site residues include histidine 196 and glutamate 198.

As to quaternary structure, part of the FGAM synthase complex composed of 1 PurL, 1 PurQ and 2 PurS subunits.

It is found in the cytoplasm. It carries out the reaction N(2)-formyl-N(1)-(5-phospho-beta-D-ribosyl)glycinamide + L-glutamine + ATP + H2O = 2-formamido-N(1)-(5-O-phospho-beta-D-ribosyl)acetamidine + L-glutamate + ADP + phosphate + H(+). The catalysed reaction is L-glutamine + H2O = L-glutamate + NH4(+). Its pathway is purine metabolism; IMP biosynthesis via de novo pathway; 5-amino-1-(5-phospho-D-ribosyl)imidazole from N(2)-formyl-N(1)-(5-phospho-D-ribosyl)glycinamide: step 1/2. Part of the phosphoribosylformylglycinamidine synthase complex involved in the purines biosynthetic pathway. Catalyzes the ATP-dependent conversion of formylglycinamide ribonucleotide (FGAR) and glutamine to yield formylglycinamidine ribonucleotide (FGAM) and glutamate. The FGAM synthase complex is composed of three subunits. PurQ produces an ammonia molecule by converting glutamine to glutamate. PurL transfers the ammonia molecule to FGAR to form FGAM in an ATP-dependent manner. PurS interacts with PurQ and PurL and is thought to assist in the transfer of the ammonia molecule from PurQ to PurL. The protein is Phosphoribosylformylglycinamidine synthase subunit PurQ of Saccharolobus solfataricus (strain ATCC 35092 / DSM 1617 / JCM 11322 / P2) (Sulfolobus solfataricus).